Consider the following 595-residue polypeptide: UvrABC system protein C (595 aa).

Residues 14–91 (DSPGCYIHKD…IQENKPKYNI (78 aa)) form the GIY-YIG domain. The 36-residue stretch at 196–231 (DKIVNELRDKMTKASELMEFERAAEYRDLIEGIGLL) folds into the UVR domain.

This sequence belongs to the UvrC family. Interacts with UvrB in an incision complex.

The protein resides in the cytoplasm. Its function is as follows. The UvrABC repair system catalyzes the recognition and processing of DNA lesions. UvrC both incises the 5' and 3' sides of the lesion. The N-terminal half is responsible for the 3' incision and the C-terminal half is responsible for the 5' incision. The chain is UvrABC system protein C from Streptococcus mutans serotype c (strain ATCC 700610 / UA159).